Reading from the N-terminus, the 287-residue chain is Phosphatidylserine decarboxylase proenzyme (287 aa).

Catalysis depends on charge relay system; for autoendoproteolytic cleavage activity residues Asp-89, His-146, and Ser-252. Catalysis depends on Ser-252, which acts as the Schiff-base intermediate with substrate; via pyruvic acid; for decarboxylase activity. The residue at position 252 (Ser-252) is a Pyruvic acid (Ser); by autocatalysis.

Belongs to the phosphatidylserine decarboxylase family. PSD-B subfamily. Prokaryotic type I sub-subfamily. As to quaternary structure, heterodimer of a large membrane-associated beta subunit and a small pyruvoyl-containing alpha subunit. Pyruvate is required as a cofactor. In terms of processing, is synthesized initially as an inactive proenzyme. Formation of the active enzyme involves a self-maturation process in which the active site pyruvoyl group is generated from an internal serine residue via an autocatalytic post-translational modification. Two non-identical subunits are generated from the proenzyme in this reaction, and the pyruvate is formed at the N-terminus of the alpha chain, which is derived from the carboxyl end of the proenzyme. The autoendoproteolytic cleavage occurs by a canonical serine protease mechanism, in which the side chain hydroxyl group of the serine supplies its oxygen atom to form the C-terminus of the beta chain, while the remainder of the serine residue undergoes an oxidative deamination to produce ammonia and the pyruvoyl prosthetic group on the alpha chain. During this reaction, the Ser that is part of the protease active site of the proenzyme becomes the pyruvoyl prosthetic group, which constitutes an essential element of the active site of the mature decarboxylase.

Its subcellular location is the cell membrane. The enzyme catalyses a 1,2-diacyl-sn-glycero-3-phospho-L-serine + H(+) = a 1,2-diacyl-sn-glycero-3-phosphoethanolamine + CO2. Its pathway is phospholipid metabolism; phosphatidylethanolamine biosynthesis; phosphatidylethanolamine from CDP-diacylglycerol: step 2/2. Its function is as follows. Catalyzes the formation of phosphatidylethanolamine (PtdEtn) from phosphatidylserine (PtdSer). This chain is Phosphatidylserine decarboxylase proenzyme, found in Shewanella sediminis (strain HAW-EB3).